Reading from the N-terminus, the 142-residue chain is Hemoglobin subunit alpha-A (142 aa).

Positions 2 to 142 constitute a Globin domain; sequence VLSAADKTNV…VGAVLTAKYR (141 aa). An O2-binding site is contributed by histidine 59. Position 88 (histidine 88) interacts with heme b.

The protein belongs to the globin family. As to quaternary structure, heterotetramer of two alpha chains and two beta chains. In terms of tissue distribution, red blood cells.

Functionally, involved in oxygen transport from the lung to the various peripheral tissues. This chain is Hemoglobin subunit alpha-A (HBAA), found in Anas platyrhynchos platyrhynchos (Northern mallard).